We begin with the raw amino-acid sequence, 559 residues long: Sesquiterpene synthase TPS3 (559 aa).

(2E,6E)-farnesyl diphosphate-binding residues include R275, D312, D316, R453, and D456. Mg(2+)-binding residues include D312 and D316. Positions 312 to 316 (DDTYD) match the DDXXD motif motif. Residues D456, T460, and E464 each coordinate Mg(2+).

This sequence belongs to the terpene synthase family. Tpsa subfamily. In terms of assembly, monomer. Mg(2+) serves as cofactor. As to expression, highly expressed in glandular trichomes. Expressed in roots and leaves.

It localises to the cytoplasm. It carries out the reaction (2E,6E)-farnesyl diphosphate = (+)-(R)-germacrene A + diphosphate. It functions in the pathway secondary metabolite biosynthesis; terpenoid biosynthesis. Functionally, sesquiterpene synthase involved in the biosynthesis of volatile compounds. Mediates the conversion of (2E,6E)-farnesyl diphosphate (FPP) into (+)-(R)-germacrene A. This chain is Sesquiterpene synthase TPS3, found in Xanthium strumarium (Rough cocklebur).